The sequence spans 463 residues: Glycine--tRNA ligase (463 aa).

Residues Arg-98 and Glu-174 each contribute to the substrate site. ATP-binding positions include 206 to 208, 216 to 221, 290 to 291, and 334 to 337; these read RNE, FRTREF, EL, and GADR. Substrate is bound at residue 221–225; it reads FEQME. 330 to 334 contacts substrate; sequence EPSLG.

Belongs to the class-II aminoacyl-tRNA synthetase family. As to quaternary structure, homodimer.

Its subcellular location is the cytoplasm. The catalysed reaction is tRNA(Gly) + glycine + ATP = glycyl-tRNA(Gly) + AMP + diphosphate. In terms of biological role, catalyzes the attachment of glycine to tRNA(Gly). The chain is Glycine--tRNA ligase from Staphylococcus epidermidis (strain ATCC 35984 / DSM 28319 / BCRC 17069 / CCUG 31568 / BM 3577 / RP62A).